Here is a 453-residue protein sequence, read N- to C-terminus: Bifunctional protein GlmU (453 aa).

The tract at residues 1–225 (MHAHVILAAG…AEEALGVNTR (225 aa)) is pyrophosphorylase. UDP-N-acetyl-alpha-D-glucosamine contacts are provided by residues 7 to 10 (LAAG), Lys21, Gln72, and 77 to 78 (GT). A Mg(2+)-binding site is contributed by Asp102. Residues Gly138, Glu152, Asn167, and Asn223 each contribute to the UDP-N-acetyl-alpha-D-glucosamine site. Asn223 provides a ligand contact to Mg(2+). Residues 226 to 246 (EELARVEGVLLRRLRAEWMGK) form a linker region. The interval 247–453 (GVRMILPETI…GYALRKLGEG (207 aa)) is N-acetyltransferase. Positions 329 and 347 each coordinate UDP-N-acetyl-alpha-D-glucosamine. Residue His359 is the Proton acceptor of the active site. UDP-N-acetyl-alpha-D-glucosamine is bound by residues Tyr362 and Asn373. Acetyl-CoA is bound by residues Ala376, 382–383 (NY), Ser401, Ala419, and Arg436.

It in the N-terminal section; belongs to the N-acetylglucosamine-1-phosphate uridyltransferase family. This sequence in the C-terminal section; belongs to the transferase hexapeptide repeat family. Homotrimer. It depends on Mg(2+) as a cofactor.

It is found in the cytoplasm. It carries out the reaction alpha-D-glucosamine 1-phosphate + acetyl-CoA = N-acetyl-alpha-D-glucosamine 1-phosphate + CoA + H(+). The enzyme catalyses N-acetyl-alpha-D-glucosamine 1-phosphate + UTP + H(+) = UDP-N-acetyl-alpha-D-glucosamine + diphosphate. The protein operates within nucleotide-sugar biosynthesis; UDP-N-acetyl-alpha-D-glucosamine biosynthesis; N-acetyl-alpha-D-glucosamine 1-phosphate from alpha-D-glucosamine 6-phosphate (route II): step 2/2. It participates in nucleotide-sugar biosynthesis; UDP-N-acetyl-alpha-D-glucosamine biosynthesis; UDP-N-acetyl-alpha-D-glucosamine from N-acetyl-alpha-D-glucosamine 1-phosphate: step 1/1. It functions in the pathway bacterial outer membrane biogenesis; LPS lipid A biosynthesis. In terms of biological role, catalyzes the last two sequential reactions in the de novo biosynthetic pathway for UDP-N-acetylglucosamine (UDP-GlcNAc). The C-terminal domain catalyzes the transfer of acetyl group from acetyl coenzyme A to glucosamine-1-phosphate (GlcN-1-P) to produce N-acetylglucosamine-1-phosphate (GlcNAc-1-P), which is converted into UDP-GlcNAc by the transfer of uridine 5-monophosphate (from uridine 5-triphosphate), a reaction catalyzed by the N-terminal domain. This is Bifunctional protein GlmU from Thermus thermophilus (strain ATCC BAA-163 / DSM 7039 / HB27).